A 161-amino-acid chain; its full sequence is Protein translocase subunit SecE (161 aa).

The span at 1-12 (MSDEGDVADEAV) shows a compositional bias: acidic residues. Residues 1–80 (MSDEGDVADE…GVAKDDSTTK (80 aa)) are disordered. The helical transmembrane segment at 133–153 (VVLAFLAFMVALVAGADLGLT) threads the bilayer.

Belongs to the SecE/SEC61-gamma family. In terms of assembly, component of the Sec protein translocase complex. Heterotrimer consisting of SecY, SecE and SecG subunits. The heterotrimers can form oligomers, although 1 heterotrimer is thought to be able to translocate proteins. Interacts with the ribosome. Interacts with SecDF, and other proteins may be involved. Interacts with SecA.

The protein localises to the cell membrane. Its function is as follows. Essential subunit of the Sec protein translocation channel SecYEG. Clamps together the 2 halves of SecY. May contact the channel plug during translocation. The sequence is that of Protein translocase subunit SecE from Mycobacterium bovis (strain ATCC BAA-935 / AF2122/97).